The following is an 826-amino-acid chain: Ribonucleases P/MRP protein subunit POP1 (826 aa).

2 disordered regions span residues 1 to 24 and 49 to 91; these read MATT…PRKI and NKDF…SGGD. Positions 58–65 match the Nuclear localization signal motif; that stretch reads KRRRTNSY. Positions 70–79 are enriched in basic residues; it reads AKKRNIKRQK.

As to quaternary structure, component of nuclear RNase P and RNase MRP ribonucleoproteins. RNase P consists of a catalytic RNA moiety and different protein chains. Several subunits of RNase P are also part of the RNase MRP complex. RNase MRP consists of a catalytic RNA moiety and several protein subunits.

The protein localises to the nucleus. Its subcellular location is the nucleolus. In terms of biological role, component of ribonuclease P, a ribonucleoprotein complex that generates mature tRNA molecules by cleaving their 5'-ends. Also a component of the MRP ribonuclease complex, which cleaves pre-rRNA sequences. Required for rRNA maturation, including 5.8S rRNA processing. This is Ribonucleases P/MRP protein subunit POP1 from Arabidopsis thaliana (Mouse-ear cress).